The sequence spans 475 residues: Aspartic proteinase 39 (475 aa).

A signal peptide spans 1–23 (MELRRKLCIVVAVFVIVIEFASA). Residues 74 to 422 (YFTKIKLGSP…DLDNEVIGWA (349 aa)) form the Peptidase A1 domain. D92 is a catalytic residue. N-linked (GlcNAc...) asparagine glycosylation is found at N124 and N222. D303 is a catalytic residue. 2 N-linked (GlcNAc...) asparagine glycosylation sites follow: N425 and N446. S449 carries GPI-anchor amidated serine lipidation. The propeptide at 450–475 (APRLLMITKLLTILSPLIVMAFTSLA) is removed in mature form.

The protein belongs to the peptidase A1 family. Highly expressed in pollen and pollen tubes. Mostly expressed in inflorescence, flowers and siliques, and barely in leaves and seedlings.

It is found in the cell membrane. The protein resides in the cytoplasm. Its subcellular location is the cytosol. In terms of biological role, displays aspartic proteolytic activity. Together with A36, contributes to pollen and ovule development, including the apical cell wall constitution of the growing pollen tubes. The protein is Aspartic proteinase 39 of Arabidopsis thaliana (Mouse-ear cress).